The chain runs to 371 residues: Cytoplasmic dynein intermediate light chain DYN3 (371 aa).

Belongs to the dynein light intermediate chain DYN3 family. The cytoplasmic dynein is composed of at least two heavy chains and a number of intermediate and light chains.

The protein resides in the cytoplasm. The protein localises to the cytoskeleton. Functionally, component of the cytoplasmic dynein which acts as a motor for the intracellular retrograde motility of vesicles and organelles along microtubules. May play an important role in the proper orientation of the mitotic spindle into the budding daughter cell yeast. Probably required for normal progression of the cell cycle. This Eremothecium gossypii (strain ATCC 10895 / CBS 109.51 / FGSC 9923 / NRRL Y-1056) (Yeast) protein is Cytoplasmic dynein intermediate light chain DYN3 (DYN3).